Reading from the N-terminus, the 464-residue chain is Soluble pyridine nucleotide transhydrogenase (464 aa).

Residue 35–44 (DSRRQVGGNC) participates in FAD binding.

It belongs to the class-I pyridine nucleotide-disulfide oxidoreductase family. FAD serves as cofactor.

It is found in the cytoplasm. The enzyme catalyses NAD(+) + NADPH = NADH + NADP(+). Functionally, conversion of NADPH, generated by peripheral catabolic pathways, to NADH, which can enter the respiratory chain for energy generation. The chain is Soluble pyridine nucleotide transhydrogenase from Pseudomonas putida (strain W619).